Consider the following 206-residue polypeptide: MSFPYEYIFKYIIIGDMGVGKSCLLHQFTENKFVPDSPHTIGVEFGTRIVDVNNKKIKLQIWDTAGQERFRAVTRSYYRGAAGALLVYDITRRITYNHLTTWLTDARNLTNPNTVIMLIGNKKDLEGQRDVTYEEASAFAKQNGLIFVESSAKTGENVEEAFLRTAKLIFQSVQEGNVDLIPDGGITKNPPQTITDKPQDASKCSC.

15 to 22 contributes to the GTP binding site; the sequence is GDMGVGKS. Positions 37 to 45 match the Effector region motif; the sequence is SPHTIGVEF. GTP is bound by residues 63 to 67 and 121 to 124; these read DTAGQ and NKKD. A disordered region spans residues 182–206; that stretch reads PDGGITKNPPQTITDKPQDASKCSC. Over residues 189–206 the composition is skewed to polar residues; sequence NPPQTITDKPQDASKCSC. Residues Cys204 and Cys206 are each lipidated (S-geranylgeranyl cysteine). The residue at position 206 (Cys206) is a Cysteine methyl ester.

This sequence belongs to the small GTPase superfamily. Rab family.

It is found in the endosome. The protein resides in the contractile vacuole. Its subcellular location is the membrane. It catalyses the reaction GTP + H2O = GDP + phosphate + H(+). With respect to regulation, rab activation is generally mediated by a guanine exchange factor (GEF), while inactivation through hydrolysis of bound GTP is catalyzed by a GTPase activating protein (GAP). That Rab is activated by the DENND6A and DENND6B guanine exchange factors (GEF). Its function is as follows. The small GTPases Rab are key regulators of intracellular membrane trafficking, from the formation of transport vesicles to their fusion with membranes. Rabs cycle between an inactive GDP-bound form and an active GTP-bound form that is able to recruit to membranes different set of downstream effectors directly responsible for vesicle formation, movement, tethering and fusion. Regulates the fusion of phagosomes and lysosomes. This Dictyostelium discoideum (Social amoeba) protein is Ras-related protein Rab-14 (rab14).